The following is a 404-amino-acid chain: Succinyl-diaminopimelate desuccinylase (404 aa).

Histidine 80 provides a ligand contact to Zn(2+). Residue aspartate 82 is part of the active site. A Zn(2+)-binding site is contributed by aspartate 113. Glutamate 147 functions as the Proton acceptor in the catalytic mechanism. Zn(2+) is bound by residues glutamate 148, glutamate 176, and histidine 373.

The protein belongs to the peptidase M20A family. DapE subfamily. In terms of assembly, homodimer. Zn(2+) serves as cofactor. Co(2+) is required as a cofactor.

The catalysed reaction is N-succinyl-(2S,6S)-2,6-diaminopimelate + H2O = (2S,6S)-2,6-diaminopimelate + succinate. It functions in the pathway amino-acid biosynthesis; L-lysine biosynthesis via DAP pathway; LL-2,6-diaminopimelate from (S)-tetrahydrodipicolinate (succinylase route): step 3/3. In terms of biological role, catalyzes the hydrolysis of N-succinyl-L,L-diaminopimelic acid (SDAP), forming succinate and LL-2,6-diaminopimelate (DAP), an intermediate involved in the bacterial biosynthesis of lysine and meso-diaminopimelic acid, an essential component of bacterial cell walls. The protein is Succinyl-diaminopimelate desuccinylase of Allorhizobium ampelinum (strain ATCC BAA-846 / DSM 112012 / S4) (Agrobacterium vitis (strain S4)).